Here is a 597-residue protein sequence, read N- to C-terminus: Putative lipase ATG15 (597 aa).

Residues 1–15 (MTLEKNRHANKGTSW) lie on the Cytoplasmic side of the membrane. Residues 16–36 (TWMIYKFVVGVITVAILVLFI) form a helical; Signal-anchor for type II membrane protein membrane-spanning segment. Over 37–597 (TQKSVSQAQD…DDDEDTFERK (561 aa)) the chain is Lumenal. Residues Asn-195, Asn-262, and Asn-346 are each glycosylated (N-linked (GlcNAc...) asparagine). Ser-364 acts as the Charge relay system in catalysis. A glycan (N-linked (GlcNAc...) asparagine) is linked at Asn-481. A disordered region spans residues 507-570 (EKDEPKLPNP…PTDQDPPKKC (64 aa)). The segment covering 519 to 554 (SSSKSTLSTKTTSLKSSSTYSGSTSSSTVTKTTQTS) has biased composition (low complexity).

It belongs to the AB hydrolase superfamily. Lipase family. In terms of assembly, binds to both phosphatidylinositol (PI) and phosphatidylinositol 3,5-bisphosphate (PIP2).

Its subcellular location is the endosome. The protein localises to the multivesicular body membrane. It localises to the prevacuolar compartment membrane. It carries out the reaction a triacylglycerol + H2O = a diacylglycerol + a fatty acid + H(+). In terms of biological role, lipase which is essential for lysis of subvacuolar cytoplasm to vacuole targeted bodies and intravacuolar autophagic bodies. Involved in the lysis of intravacuolar multivesicular body (MVB) vesicles. The intravacuolar membrane disintegration by ATG15 is critical to life span extension. The sequence is that of Putative lipase ATG15 (ATG15) from Candida albicans (strain SC5314 / ATCC MYA-2876) (Yeast).